The following is a 107-amino-acid chain: NADH-quinone oxidoreductase subunit K 2 (107 aa).

The next 3 helical transmembrane spans lie at Leu3–Ala23, Val30–Phe50, and Ile67–Ile87.

This sequence belongs to the complex I subunit 4L family. In terms of assembly, NDH-1 is composed of 14 different subunits. Subunits NuoA, H, J, K, L, M, N constitute the membrane sector of the complex.

Its subcellular location is the cell membrane. It catalyses the reaction a quinone + NADH + 5 H(+)(in) = a quinol + NAD(+) + 4 H(+)(out). Its function is as follows. NDH-1 shuttles electrons from NADH, via FMN and iron-sulfur (Fe-S) centers, to quinones in the respiratory chain. The immediate electron acceptor for the enzyme in this species is believed to be a menaquinone. Couples the redox reaction to proton translocation (for every two electrons transferred, four hydrogen ions are translocated across the cytoplasmic membrane), and thus conserves the redox energy in a proton gradient. The chain is NADH-quinone oxidoreductase subunit K 2 from Symbiobacterium thermophilum (strain DSM 24528 / JCM 14929 / IAM 14863 / T).